Reading from the N-terminus, the 100-residue chain is Urease subunit gamma (100 aa).

The protein belongs to the urease gamma subunit family. In terms of assembly, heterotrimer of UreA (gamma), UreB (beta) and UreC (alpha) subunits. Three heterotrimers associate to form the active enzyme.

It is found in the cytoplasm. It carries out the reaction urea + 2 H2O + H(+) = hydrogencarbonate + 2 NH4(+). The protein operates within nitrogen metabolism; urea degradation; CO(2) and NH(3) from urea (urease route): step 1/1. This is Urease subunit gamma from Burkholderia ambifaria (strain MC40-6).